The chain runs to 79 residues: Acyl carrier protein (79 aa).

In terms of domain architecture, Carrier spans 2–77 (SSIEDRVKKI…QAVDYIKKHL (76 aa)). S37 bears the O-(pantetheine 4'-phosphoryl)serine mark.

Belongs to the acyl carrier protein (ACP) family. In terms of processing, 4'-phosphopantetheine is transferred from CoA to a specific serine of apo-ACP by AcpS. This modification is essential for activity because fatty acids are bound in thioester linkage to the sulfhydryl of the prosthetic group.

The protein resides in the cytoplasm. The protein operates within lipid metabolism; fatty acid biosynthesis. In terms of biological role, carrier of the growing fatty acid chain in fatty acid biosynthesis. This Halorhodospira halophila (strain DSM 244 / SL1) (Ectothiorhodospira halophila (strain DSM 244 / SL1)) protein is Acyl carrier protein.